A 516-amino-acid polypeptide reads, in one-letter code: Cytochrome P450 monooxygenase ntnM (516 aa).

Residues 22-42 (IINVILSIAAIALIRALAISI) form a helical membrane-spanning segment. Heme is bound at residue Cys-453.

It belongs to the cytochrome P450 family. Requires heme as cofactor.

It localises to the membrane. The protein operates within secondary metabolite biosynthesis; terpenoid biosynthesis. Functionally, cytochrome P450 monooxygenase; part of the gene cluster that mediates the biosynthesis of the meroterpenoids nectripenoids A and B, as well as cochliquninone D and isocochliquninone E. The pathway probably begins with the HR-PKS ntnH that catalyzes two chain-extension steps to form a reduced triketide, which then primes the SAT domain in the NR-PKS ntnG to initiate three more cycles of extension to give a linear hexaketide corresponding to the polyketide part of nectripenoids. The FAD-dependent monooxygenase ntnJ then performs an oxidative decarboxylation at C11 of the ntnH/ntnG product, via an electrophilic aromatic hydroxylation with concomitant ipso-decarboxylation. The membrane-bound polyprenyl transferase ntnF then introduces a farnesyl group before the FAD-dependent monooxygenase ntnK functions as the first epoxidase on terminal C12'-C13' olefin, followed by a second epoxidation on C7'-C8' catalyzed by ntnA. The terpene cyclase/mutase ntnI then initiates the sequential tricyclic ring formation through protonation of the terminal epoxide and catalyzes the regioselective and stereoselective 6/6/6-tricyclic ring formation. The cytochrome P450 monooxygenase ntnM may then hydroxylate C1'. This chain is Cytochrome P450 monooxygenase ntnM, found in Nectria sp.